A 77-amino-acid polypeptide reads, in one-letter code: Apidermin 2 (77 aa).

The N-terminal stretch at 1–16 is a signal peptide; that stretch reads MKSLLILFAIVAVVAA.

Expressed in the epidermis, hypopharyngeal glands, fat body, trachea, esophagus and stomach.

The protein localises to the secreted. Antimicrobial peptide that binds cell wall carbohydrates of microbial symbionts and induces structural damage. Binds the cell wall carbohydrates mannan, N-acetyl-D-glucosamine and lipopolysaccharide. Can target fungi, Gram-negative and Gram-positive bacteria. This chain is Apidermin 2, found in Apis mellifera (Honeybee).